The primary structure comprises 128 residues: UPF0325 protein YaeH (128 aa).

This sequence belongs to the UPF0325 family.

In Escherichia fergusonii (strain ATCC 35469 / DSM 13698 / CCUG 18766 / IAM 14443 / JCM 21226 / LMG 7866 / NBRC 102419 / NCTC 12128 / CDC 0568-73), this protein is UPF0325 protein YaeH.